Reading from the N-terminus, the 245-residue chain is tRNA pseudouridine synthase A (245 aa).

The active-site Nucleophile is the aspartate 52. Tyrosine 112 contacts substrate.

It belongs to the tRNA pseudouridine synthase TruA family. Homodimer.

It catalyses the reaction uridine(38/39/40) in tRNA = pseudouridine(38/39/40) in tRNA. Functionally, formation of pseudouridine at positions 38, 39 and 40 in the anticodon stem and loop of transfer RNAs. The polypeptide is tRNA pseudouridine synthase A (Dictyoglomus turgidum (strain DSM 6724 / Z-1310)).